The following is a 491-amino-acid chain: Cytosolic Fe-S cluster assembly factor NAR1 (491 aa).

Positions 20, 59, 62, 65, 177, 231, 412, and 416 each coordinate [4Fe-4S] cluster.

The protein belongs to the NARF family. As to quaternary structure, interacts with CIA1.

Component of the cytosolic Fe/S protein assembly machinery. Required for maturation of extramitochondrial Fe/S proteins. May play a role in the transfer of pre-assembled Fe/S clusters to target apoproteins. The sequence is that of Cytosolic Fe-S cluster assembly factor NAR1 (NAR1) from Saccharomyces cerevisiae (strain YJM789) (Baker's yeast).